Here is a 173-residue protein sequence, read N- to C-terminus: NADH-ubiquinone oxidoreductase chain 6 (173 aa).

6 helical membrane passes run 1 to 21 (MTYFVLFLGLCFVLGGLAVAS), 27 to 47 (YGVVGLVLASIAGCGWLLSLG), 48 to 68 (VSFVSLVLFMVYLGGMLVVFV), 87 to 107 (VVGYGVSLITVLVVGVVVGGF), 113 to 133 (FGVITVDSVGMFSVRLDFGGV), and 139 to 159 (CGVGMFLVAGWGLLLTLFVVL).

Belongs to the complex I subunit 6 family.

Its subcellular location is the mitochondrion membrane. The enzyme catalyses a ubiquinone + NADH + 5 H(+)(in) = a ubiquinol + NAD(+) + 4 H(+)(out). Its function is as follows. Core subunit of the mitochondrial membrane respiratory chain NADH dehydrogenase (Complex I) that is believed to belong to the minimal assembly required for catalysis. Complex I functions in the transfer of electrons from NADH to the respiratory chain. The immediate electron acceptor for the enzyme is believed to be ubiquinone. This chain is NADH-ubiquinone oxidoreductase chain 6 (MT-ND6), found in Alle alle (Dovekie).